The sequence spans 236 residues: uncharacterized protein (236 aa).

One can recognise a DPCK domain in the interval 3–208 (ILGLTGSIAT…PSYFFTLLCL (206 aa)). 8 to 15 (GSIATGKS) is an ATP binding site. Residues serine 82 and serine 86 each carry the phosphoserine modification.

The protein belongs to the CoaE family.

The protein resides in the cytoplasm. This is an uncharacterized protein from Schizosaccharomyces pombe (strain 972 / ATCC 24843) (Fission yeast).